Here is a 559-residue protein sequence, read N- to C-terminus: Potassium-transporting ATPase potassium-binding subunit (559 aa).

Transmembrane regions (helical) follow at residues 5–25, 27–47, 63–83, 132–152, 170–190, 253–273, 283–303, 327–347, 356–376, 379–399, 416–436, 484–504, and 524–544; these read GFLL…PLGS, LARL…RILW, LLAL…LLFW, GLTV…FALI, LVRI…LFFI, LAQM…FGEA, LLWA…WAEV, FGVL…CGAV, ALGG…FGGV, GLYG…LMIG, MTAL…ALAM, LLAF…MAIA, and GALF…LTFI.

This sequence belongs to the KdpA family. The system is composed of three essential subunits: KdpA, KdpB and KdpC.

It is found in the cell inner membrane. Part of the high-affinity ATP-driven potassium transport (or Kdp) system, which catalyzes the hydrolysis of ATP coupled with the electrogenic transport of potassium into the cytoplasm. This subunit binds the periplasmic potassium ions and delivers the ions to the membrane domain of KdpB through an intramembrane tunnel. The polypeptide is Potassium-transporting ATPase potassium-binding subunit (Salmonella choleraesuis (strain SC-B67)).